The primary structure comprises 398 residues: G2/mitotic-specific cyclin-B2 (398 aa).

Disordered stretches follow at residues 1 to 26 (MALLRRPTVSTDLENNDTGVNSKPKS) and 53 to 76 (AQNTKVPVPPTKTTNVNKHPKPTA). Threonine 8 is subject to Phosphothreonine. Polar residues predominate over residues 8–23 (TVSTDLENNDTGVNSK). Low complexity predominate over residues 55–69 (NTKVPVPPTKTTNVN). Residues serine 77 and serine 92 each carry the phosphoserine modification. Threonine 94 bears the Phosphothreonine mark. Phosphoserine occurs at positions 99, 392, and 398.

This sequence belongs to the cyclin family. Cyclin AB subfamily. Interacts with the CDK1 protein kinase to form a serine/threonine kinase holoenzyme complex also known as maturation promoting factor (MPF). The cyclin subunit imparts substrate specificity to the complex.

In terms of biological role, essential for the control of the cell cycle at the G2/M (mitosis) transition. This Bos taurus (Bovine) protein is G2/mitotic-specific cyclin-B2 (CCNB2).